The sequence spans 410 residues: Beta-arrestin-2 (410 aa).

A Phosphotyrosine modification is found at tyrosine 48. Residues proline 176 and proline 181 each carry the hydroxyproline; by PHD2 modification. The interval 241–410 (ADICLFSTAQ…KDDDCDDQFC (170 aa)) is interaction with TRAF6. At serine 361 the chain carries Phosphoserine. The tract at residues 378 to 410 (DTNYATDDDIVFEDFARLRLKGMKDDDCDDQFC) is interaction with AP2B1. At threonine 383 the chain carries Phosphothreonine; by CaMK2. A [DE]-X(1,2)-F-X-X-[FL]-X-X-X-R motif motif is present at residues 386–396 (DIVFEDFARLR).

This sequence belongs to the arrestin family. In terms of assembly, homooligomer; the self-association is mediated by InsP6-binding. Heterooligomer with ARRB1; the association is mediated by InsP6-binding. Interacts with ADRB2 and CHRM2. Interacts with PDE4A. Interacts with PDE4D. Interacts with MAPK10, MAPK1 and MAPK3. Interacts with DRD2. Interacts with FSHR. Interacts with CLTC. Interacts with HTR2C. Interacts with CCR5. Interacts with CXCR4. Interacts with SRC. Interacts with DUSP16; the interaction is interrupted by stimulation of AGTR1 and activation of MAPK10. Interacts with CHUK; the interaction is enhanced stimulation of ADRB2. Interacts with RELA. Interacts with MDM2; the interaction is enhanced by activation of GPCRs. Interacts with SLC9A5. Interacts with TRAF6. Interacts with IGF1R. Interacts with ENG. Interacts with KIR2DL1, KIR2DL3 and KIR2DL4. Interacts with LDLR. Interacts with AP2B1. Interacts with C5AR1. Interacts with RAF1. Interacts with MAP2K1. Interacts with MAPK1. Interacts with MAPK10; the interaction enhances MAPK10 activation by MAP3K5. Interacts with MAP2K4; the interaction is enhanced by presence of MAP3K5 and MAPK10. Interacts with MAP3K5. Interacts with AKT1. Interacts with IKBKB and MAP3K14. Interacts with SMO (activated). Interacts with GSK3A and GSK3B. Associates with protein phosphatase 2A (PP2A). Interacts with CXCR4; the interaction is dependent on C-terminal phosphorylation of CXCR4 and allows activation of MAPK1 and MAPK3. Interacts with GPR143. Interacts with HCK and CXCR1 (phosphorylated). Interacts with ACKR3 and ACKR4. Interacts with ARRDC1; the interaction is direct. Interacts with GPR61, GPR62 and GPR135. Interacts (via NACHT and LRR domains) with NLRP3; this interaction is direct and inducible by omega-3 polyunsaturated fatty acids (PUFAs). Interacts with FFAR4 (via C-terminus); this interaction is stimulated by long-chain fatty acids (LCFAs). Interacts with GPR35. Interacts with GPR84. Interacts with TIGIT; this interaction inhibits the NF-kappa-B pathway. Interacts with TGFBR3. Phosphorylated at Thr-383 in the cytoplasm; probably dephosphorylated at the plasma membrane. The phosphorylation does not regulate internalization and recycling of ADRB2, interaction with clathrin or AP2B1. In terms of processing, the ubiquitination status appears to regulate the formation and trafficking of beta-arrestin-GPCR complexes and signaling. Ubiquitination appears to occur GPCR-specific. Ubiquitinated by MDM2; the ubiquitination is required for rapid internalization of ADRB2. Deubiquitinated by USP33; the deubiquitination leads to a dissociation of the beta-arrestin-GPCR complex. Stimulation of a class A GPCR, such as ADRB2, induces transient ubiquitination and subsequently promotes association with USP33. Stimulation of a class B GPCR promotes a sustained ubiquitination. Deubiquitinated by USP20; allowing USP20 to deubiquitinate TRAF6 leading to inhibition of NF-kappa-B signaling. Post-translationally, hydroxylation by PHD2 modulates the rate of internalization by slowing down recruitment to the plasma membrane and inhibiting subsequent co-internalization with class A receptors. Predominantly localized in neuronal tissues and in the spleen.

Its subcellular location is the cytoplasm. It localises to the nucleus. It is found in the cell membrane. The protein localises to the membrane. The protein resides in the clathrin-coated pit. Its subcellular location is the cytoplasmic vesicle. In terms of biological role, functions in regulating agonist-mediated G-protein coupled receptor (GPCR) signaling by mediating both receptor desensitization and resensitization processes. During homologous desensitization, beta-arrestins bind to the GPRK-phosphorylated receptor and sterically preclude its coupling to the cognate G-protein; the binding appears to require additional receptor determinants exposed only in the active receptor conformation. The beta-arrestins target many receptors for internalization by acting as endocytic adapters (CLASPs, clathrin-associated sorting proteins) and recruiting the GPRCs to the adapter protein 2 complex 2 (AP-2) in clathrin-coated pits (CCPs). However, the extent of beta-arrestin involvement appears to vary significantly depending on the receptor, agonist and cell type. Internalized arrestin-receptor complexes traffic to intracellular endosomes, where they remain uncoupled from G-proteins. Two different modes of arrestin-mediated internalization occur. Class A receptors, like ADRB2, OPRM1, ENDRA, D1AR and ADRA1B dissociate from beta-arrestin at or near the plasma membrane and undergo rapid recycling. Class B receptors, like AVPR2, AGTR1, NTSR1, TRHR and TACR1 internalize as a complex with arrestin and traffic with it to endosomal vesicles, presumably as desensitized receptors, for extended periods of time. Receptor resensitization then requires that receptor-bound arrestin is removed so that the receptor can be dephosphorylated and returned to the plasma membrane. Mediates endocytosis of CCR7 following ligation of CCL19 but not CCL21. Involved in internalization of P2RY1, P2RY4, P2RY6 and P2RY11 and ATP-stimulated internalization of P2RY2. Involved in phosphorylation-dependent internalization of OPRD1 and subsequent recycling or degradation. Involved in ubiquitination of IGF1R. Beta-arrestins function as multivalent adapter proteins that can switch the GPCR from a G-protein signaling mode that transmits short-lived signals from the plasma membrane via small molecule second messengers and ion channels to a beta-arrestin signaling mode that transmits a distinct set of signals that are initiated as the receptor internalizes and transits the intracellular compartment. Acts as a signaling scaffold for MAPK pathways such as MAPK1/3 (ERK1/2) and MAPK10 (JNK3). ERK1/2 and JNK3 activated by the beta-arrestin scaffold are largely excluded from the nucleus and confined to cytoplasmic locations such as endocytic vesicles, also called beta-arrestin signalosomes. Acts as a signaling scaffold for the AKT1 pathway. GPCRs for which the beta-arrestin-mediated signaling relies on both ARRB1 and ARRB2 (codependent regulation) include ADRB2, F2RL1 and PTH1R. For some GPCRs the beta-arrestin-mediated signaling relies on either ARRB1 or ARRB2 and is inhibited by the other respective beta-arrestin form (reciprocal regulation). Increases ERK1/2 signaling in AGTR1- and AVPR2-mediated activation (reciprocal regulation). Involved in CCR7-mediated ERK1/2 signaling involving ligand CCL19. Is involved in type-1A angiotensin II receptor/AGTR1-mediated ERK activity. Is involved in type-1A angiotensin II receptor/AGTR1-mediated MAPK10 activity. Is involved in dopamine-stimulated AKT1 activity in the striatum by disrupting the association of AKT1 with its negative regulator PP2A. Involved in AGTR1-mediated chemotaxis. Appears to function as signaling scaffold involved in regulation of MIP-1-beta-stimulated CCR5-dependent chemotaxis. Involved in attenuation of NF-kappa-B-dependent transcription in response to GPCR or cytokine stimulation by interacting with and stabilizing CHUK. Suppresses UV-induced NF-kappa-B-dependent activation by interacting with CHUK. The function is promoted by stimulation of ADRB2 and dephosphorylation of ARRB2. Involved in IL8-mediated granule release in neutrophils. Involved in p53/TP53-mediated apoptosis by regulating MDM2 and reducing the MDM2-mediated degradation of p53/TP53. May serve as nuclear messenger for GPCRs. Upon stimulation of OR1D2, may be involved in regulation of gene expression during the early processes of fertilization. Also involved in regulation of receptors other than GPCRs. Involved in endocytosis of TGFBR2 and TGFBR3 and down-regulates TGF-beta signaling such as NF-kappa-B activation. Involved in endocytosis of low-density lipoprotein receptor/LDLR. Involved in endocytosis of smoothened homolog/Smo, which also requires GRK2. Involved in endocytosis of SLC9A5. Involved in endocytosis of ENG and subsequent TGF-beta-mediated ERK activation and migration of epithelial cells. Involved in Toll-like receptor and IL-1 receptor signaling through the interaction with TRAF6 which prevents TRAF6 autoubiquitination and oligomerization required for activation of NF-kappa-B and JUN. Involved in insulin resistance by acting as insulin-induced signaling scaffold for SRC, AKT1 and INSR. Involved in regulation of inhibitory signaling of natural killer cells by recruiting PTPN6 and PTPN11 to KIR2DL1. Involved in the internalization of the atypical chemokine receptor ACKR3. Acts as an adapter protein coupling FFAR4 receptor to specific downstream signaling pathways, as well as mediating receptor endocytosis. During the activation step of NLRP3 inflammasome, directly associates with NLRP3 leading to inhibition of pro-inflammatory cytokine release and inhibition of inflammation. The protein is Beta-arrestin-2 (Arrb2) of Rattus norvegicus (Rat).